Consider the following 294-residue polypeptide: UDP-N-acetylenolpyruvoylglucosamine reductase (294 aa).

Residues 26–189 (VGGQADVLFK…IEAEFKGVSS (164 aa)) enclose the FAD-binding PCMH-type domain. R169 is a catalytic residue. Catalysis depends on C218, which acts as the Proton donor. E288 is a catalytic residue.

It belongs to the MurB family. FAD serves as cofactor.

It is found in the cytoplasm. It carries out the reaction UDP-N-acetyl-alpha-D-muramate + NADP(+) = UDP-N-acetyl-3-O-(1-carboxyvinyl)-alpha-D-glucosamine + NADPH + H(+). Its pathway is cell wall biogenesis; peptidoglycan biosynthesis. Functionally, cell wall formation. This Wolbachia pipientis subsp. Culex pipiens (strain wPip) protein is UDP-N-acetylenolpyruvoylglucosamine reductase.